The sequence spans 355 residues: Holliday junction branch migration complex subunit RuvB (355 aa).

Residues 4–190 (TDKLAAERII…FGIVARLEFY (187 aa)) form a large ATPase domain (RuvB-L) region. Residues L29, R30, G71, K74, T75, T76, 137–139 (EDY), R180, Y190, and R227 each bind ATP. T75 is a Mg(2+) binding site. The tract at residues 191 to 261 (NAEQLARIVT…VADAALKMLD (71 aa)) is small ATPAse domain (RuvB-S). The interval 264-355 (AVGFDLMDRK…LPGLWDSAAT (92 aa)) is head domain (RuvB-H). 3 residues coordinate DNA: R300, R319, and R324.

The protein belongs to the RuvB family. As to quaternary structure, homohexamer. Forms an RuvA(8)-RuvB(12)-Holliday junction (HJ) complex. HJ DNA is sandwiched between 2 RuvA tetramers; dsDNA enters through RuvA and exits via RuvB. An RuvB hexamer assembles on each DNA strand where it exits the tetramer. Each RuvB hexamer is contacted by two RuvA subunits (via domain III) on 2 adjacent RuvB subunits; this complex drives branch migration. In the full resolvosome a probable DNA-RuvA(4)-RuvB(12)-RuvC(2) complex forms which resolves the HJ.

Its subcellular location is the cytoplasm. It carries out the reaction ATP + H2O = ADP + phosphate + H(+). Its function is as follows. The RuvA-RuvB-RuvC complex processes Holliday junction (HJ) DNA during genetic recombination and DNA repair, while the RuvA-RuvB complex plays an important role in the rescue of blocked DNA replication forks via replication fork reversal (RFR). RuvA specifically binds to HJ cruciform DNA, conferring on it an open structure. The RuvB hexamer acts as an ATP-dependent pump, pulling dsDNA into and through the RuvAB complex. RuvB forms 2 homohexamers on either side of HJ DNA bound by 1 or 2 RuvA tetramers; 4 subunits per hexamer contact DNA at a time. Coordinated motions by a converter formed by DNA-disengaged RuvB subunits stimulates ATP hydrolysis and nucleotide exchange. Immobilization of the converter enables RuvB to convert the ATP-contained energy into a lever motion, pulling 2 nucleotides of DNA out of the RuvA tetramer per ATP hydrolyzed, thus driving DNA branch migration. The RuvB motors rotate together with the DNA substrate, which together with the progressing nucleotide cycle form the mechanistic basis for DNA recombination by continuous HJ branch migration. Branch migration allows RuvC to scan DNA until it finds its consensus sequence, where it cleaves and resolves cruciform DNA. This is Holliday junction branch migration complex subunit RuvB from Paraburkholderia xenovorans (strain LB400).